The sequence spans 227 residues: Germin-like protein subfamily 3 member 2 (227 aa).

Positions 1–24 (MEANTLFLLKALCLLCFNVCFTLA) are cleaved as a signal peptide. The cysteines at positions 34 and 54 are disulfide-linked. N56 and N75 each carry an N-linked (GlcNAc...) asparagine glycan. The Cupin type-1 domain maps to 68 to 213 (SGLKTAGNFT…AFGLSLKQIG (146 aa)). H115, H117, E122, and H161 together coordinate Mn(2+).

This sequence belongs to the germin family. As to quaternary structure, oligomer (believed to be a pentamer but probably hexamer).

It localises to the secreted. The protein localises to the extracellular space. It is found in the apoplast. In terms of biological role, may play a role in plant defense. Probably has no oxalate oxidase activity even if the active site is conserved. The sequence is that of Germin-like protein subfamily 3 member 2 from Arabidopsis thaliana (Mouse-ear cress).